The following is a 292-amino-acid chain: Poly(U)-specific endoribonuclease-A (292 aa).

Residues 8 to 285 (LNHELSKLFN…IGTAYPVLLS (278 aa)) form the EndoU domain. Residues His-162, His-178, and Lys-224 contribute to the active site.

It belongs to the ENDOU family. In terms of assembly, monomer. Mn(2+) is required as a cofactor.

The protein resides in the nucleus. It carries out the reaction uridylyl-uridylyl-ribonucleotide-RNA = a 3'-end uridylyl-2',3'-cyclophospho-uridine-RNA + a 5'-end dephospho-ribonucleoside-RNA. In terms of biological role, poly(U)-specific endoribonuclease involved in the processing of intron-encoded box C/D snoRNAs, such as U16 and U86. Releases products that have 2',3'-cyclic phosphate termini at the 3'-end. The sequence is that of Poly(U)-specific endoribonuclease-A (endou-a) from Xenopus laevis (African clawed frog).